A 446-amino-acid polypeptide reads, in one-letter code: Histidine--tRNA ligase (446 aa).

The protein belongs to the class-II aminoacyl-tRNA synthetase family. Homodimer.

The protein resides in the cytoplasm. The enzyme catalyses tRNA(His) + L-histidine + ATP = L-histidyl-tRNA(His) + AMP + diphosphate + H(+). The sequence is that of Histidine--tRNA ligase from Burkholderia cenocepacia (strain HI2424).